The chain runs to 61 residues: Photosystem II reaction center protein K (61 aa).

A propeptide spanning residues 1–24 (MLNIFSLICICLNSALYSSSLFFA) is cleaved from the precursor. A helical transmembrane segment spans residues 40-60 (MPVIPLFFFLLAFVWQAAVSF).

The protein belongs to the PsbK family. As to quaternary structure, PSII is composed of 1 copy each of membrane proteins PsbA, PsbB, PsbC, PsbD, PsbE, PsbF, PsbH, PsbI, PsbJ, PsbK, PsbL, PsbM, PsbT, PsbX, PsbY, PsbZ, Psb30/Ycf12, at least 3 peripheral proteins of the oxygen-evolving complex and a large number of cofactors. It forms dimeric complexes.

Its subcellular location is the plastid. The protein localises to the chloroplast thylakoid membrane. In terms of biological role, one of the components of the core complex of photosystem II (PSII). PSII is a light-driven water:plastoquinone oxidoreductase that uses light energy to abstract electrons from H(2)O, generating O(2) and a proton gradient subsequently used for ATP formation. It consists of a core antenna complex that captures photons, and an electron transfer chain that converts photonic excitation into a charge separation. The protein is Photosystem II reaction center protein K of Panax ginseng (Korean ginseng).